Consider the following 154-residue polypeptide: 6,7-dimethyl-8-ribityllumazine synthase (154 aa).

5-amino-6-(D-ribitylamino)uracil contacts are provided by residues Phe-22, 56–58, and 81–83; these read SFE and VLI. 86–87 contacts (2S)-2-hydroxy-3-oxobutyl phosphate; that stretch reads ET. The Proton donor role is filled by His-89. Phe-114 provides a ligand contact to 5-amino-6-(D-ribitylamino)uracil. Arg-128 contacts (2S)-2-hydroxy-3-oxobutyl phosphate.

It belongs to the DMRL synthase family.

The enzyme catalyses (2S)-2-hydroxy-3-oxobutyl phosphate + 5-amino-6-(D-ribitylamino)uracil = 6,7-dimethyl-8-(1-D-ribityl)lumazine + phosphate + 2 H2O + H(+). Its pathway is cofactor biosynthesis; riboflavin biosynthesis; riboflavin from 2-hydroxy-3-oxobutyl phosphate and 5-amino-6-(D-ribitylamino)uracil: step 1/2. Its function is as follows. Catalyzes the formation of 6,7-dimethyl-8-ribityllumazine by condensation of 5-amino-6-(D-ribitylamino)uracil with 3,4-dihydroxy-2-butanone 4-phosphate. This is the penultimate step in the biosynthesis of riboflavin. This Chlamydia caviae (strain ATCC VR-813 / DSM 19441 / 03DC25 / GPIC) (Chlamydophila caviae) protein is 6,7-dimethyl-8-ribityllumazine synthase.